Reading from the N-terminus, the 302-residue chain is Nudix hydrolase 22, chloroplastic (302 aa).

Residues Met-1–Leu-25 constitute a chloroplast transit peptide. The 157-residue stretch at Pro-73–Thr-229 folds into the Nudix hydrolase domain. The short motif at Lys-114 to Gly-135 is the Nudix box element. Residues Glu-129 and Glu-133 each coordinate Mg(2+).

This sequence belongs to the Nudix hydrolase family. Mg(2+) is required as a cofactor. Mn(2+) serves as cofactor. As to expression, expressed in roots, leaves, stems and inflorescences.

It is found in the plastid. The protein resides in the chloroplast. Functionally, probably mediates the hydrolysis of some nucleoside diphosphate derivatives. The sequence is that of Nudix hydrolase 22, chloroplastic (NUDT22) from Arabidopsis thaliana (Mouse-ear cress).